The following is an 84-amino-acid chain: Exodeoxyribonuclease 7 small subunit (84 aa).

The protein belongs to the XseB family. In terms of assembly, heterooligomer composed of large and small subunits.

It is found in the cytoplasm. The catalysed reaction is Exonucleolytic cleavage in either 5'- to 3'- or 3'- to 5'-direction to yield nucleoside 5'-phosphates.. In terms of biological role, bidirectionally degrades single-stranded DNA into large acid-insoluble oligonucleotides, which are then degraded further into small acid-soluble oligonucleotides. The protein is Exodeoxyribonuclease 7 small subunit of Herminiimonas arsenicoxydans.